The primary structure comprises 804 residues: DEP domain-containing protein 1A (804 aa).

Residues 24-108 (FRVGMPLRKH…DNNQLFRFPA (85 aa)) form the DEP domain. The Rho-GAP domain occupies 282–322 (DYFLNLPEPLLTFEYYELFVNILVVCGYITVSDRTSGIHKI). The residue at position 513 (Ser513) is a Phosphoserine. The interval 592-647 (AINALQLCCLLLPPPNRRKLQLLMRMISRMSQNVDMPKLHEQIGTRSLMINTFSRC) is interaction with ZNF224. The stretch at 726–760 (EQKISTSQAAIAELLENIVRSKSLSLKEKRRKLKQ) forms a coiled coil.

In terms of assembly, can form dimers. Interacts with ZNF224.

Its subcellular location is the nucleus. Functionally, may be involved in transcriptional regulation as a transcriptional corepressor. The DEPDC1A-ZNF224 complex may play a critical role in bladder carcinogenesis by repressing the transcription of the A20 gene, leading to transport of NF-KB protein into the nucleus, resulting in suppression of apoptosis of bladder cancer cells. The sequence is that of DEP domain-containing protein 1A (Depdc1a) from Mus musculus (Mouse).